The primary structure comprises 1939 residues: Myosin-8 (1939 aa).

The 50-residue stretch at 35–84 folds into the Myosin N-terminal SH3-like domain; the sequence is DAKTSVFVAEPKASYVKSTIQSKEGGKVTVKTEGGATLTVREDQVFPMNP. A phosphothreonine mark is found at Thr66 and Thr71. The region spanning 88–783 is the Myosin motor domain; it reads DKIEDMAMMT…LLGLLEEMRD (696 aa). Lys132 carries the N6,N6,N6-trimethyllysine modification. 181–188 is an ATP binding site; it reads GESGAGKT. Tyr391 carries the phosphotyrosine modification. Thr421 bears the Phosphothreonine mark. Phosphotyrosine is present on Tyr426. A Phosphoserine modification is found at Ser627. The tract at residues 660–682 is actin-binding; it reads LNKLMTNLRSTHPHFVRCIIPNE. At His758 the chain carries Pros-methylhistidine. The actin-binding stretch occupies residues 762-776; the sequence is KFGHTKVFFKAGLLG. Residues 783-815 enclose the IQ domain; sequence DEKLSQIITRTQAVCRGFLMRVEYQKMLQRREA. A coiled-coil region spans residues 844–1939; the sequence is LLKSAETEKE…REVHTKISAE (1096 aa). Residues Ser1093, Ser1097, Ser1163, and Ser1238 each carry the phosphoserine modification. A Phosphothreonine modification is found at Thr1242. Ser1244 is subject to Phosphoserine. A Phosphothreonine modification is found at Thr1256. Position 1262 is a phosphoserine (Ser1262). Phosphothreonine is present on residues Thr1266 and Thr1287. Phosphoserine is present on residues Ser1293, Ser1304, and Ser1307. Tyr1465 bears the Phosphotyrosine mark. Thr1468 carries the phosphothreonine modification. Ser1475 carries the post-translational modification Phosphoserine. The residue at position 1493 (Tyr1493) is a Phosphotyrosine. A Phosphoserine modification is found at Ser1496. Thr1502 carries the phosphothreonine modification. Phosphoserine is present on Ser1515. At Thr1518 the chain carries Phosphothreonine. Residues Ser1555, Ser1575, Ser1601, Ser1604, Ser1715, and Ser1727 each carry the phosphoserine modification. Phosphothreonine is present on Thr1731. Ser1740 bears the Phosphoserine mark.

Belongs to the TRAFAC class myosin-kinesin ATPase superfamily. Myosin family. As to quaternary structure, muscle myosin is a hexameric protein that consists of 2 heavy chain subunits (MHC), 2 alkali light chain subunits (MLC) and 2 regulatory light chain subunits (MLC-2).

It is found in the cytoplasm. It localises to the myofibril. Muscle contraction. The sequence is that of Myosin-8 (MYH8) from Canis lupus familiaris (Dog).